A 249-amino-acid chain; its full sequence is 2,3-bisphosphoglycerate-dependent phosphoglycerate mutase (249 aa).

Substrate is bound by residues 8–15 (RHGESTWN), 21–22 (TG), Arg-60, 87–90 (ERHY), Lys-98, 114–115 (RR), and 183–184 (GN). The active-site Tele-phosphohistidine intermediate is the His-9. Residue Glu-87 is the Proton donor/acceptor of the active site.

The protein belongs to the phosphoglycerate mutase family. BPG-dependent PGAM subfamily. As to quaternary structure, homodimer.

It catalyses the reaction (2R)-2-phosphoglycerate = (2R)-3-phosphoglycerate. Its pathway is carbohydrate degradation; glycolysis; pyruvate from D-glyceraldehyde 3-phosphate: step 3/5. In terms of biological role, catalyzes the interconversion of 2-phosphoglycerate and 3-phosphoglycerate. This chain is 2,3-bisphosphoglycerate-dependent phosphoglycerate mutase, found in Azoarcus sp. (strain BH72).